We begin with the raw amino-acid sequence, 279 residues long: Replication protein A 32 kDa subunit A (279 aa).

Residues 1–33 form a disordered region; it reads MFSSSQFEPNSGFSGGGFMSSQPSQAYESSSST. A compositionally biased stretch (low complexity) spans 19 to 32; the sequence is MSSQPSQAYESSSS. The segment at residues 73–148 is a DNA-binding region (OB); it reads VSLVGLVCDK…QLLVFSVRPI (76 aa).

It belongs to the replication factor A protein 2 family. In terms of assembly, heterotrimer of RPA1, RPA2 and RPA3 (canonical replication protein A complex). Interacts with ROS1. Binds to ASE1/At3g02920, PDX2, At5g62350, RPA1A/At2g06510, ARF1/At1g10630, At4g18590 and At3g52630. Post-translationally, phosphorylated in a cell-cycle-dependent manner (from the S phase until mitosis). In response to DNA damage, recruited to DNA-repair nuclear foci, as a hypophosphorylated form. In terms of tissue distribution, strongly expressed in shoot and root meristems. Present in seedlings, roots, leaves, siliques and flowers.

It localises to the nucleus. Functionally, component of the replication protein A complex (RPA) required for DNA recombination, repair and replication. The activity of RPA is mediated by single-stranded DNA binding and protein interactions. Required fo cell division in meristems. Involved in the maintenance of transcriptional epigenetic gene silencing (TGS) at specific loci (including some transposons) by regulating histone H3 acetylation, 'Lys-4' and 'Lys-9' methylation. This Arabidopsis thaliana (Mouse-ear cress) protein is Replication protein A 32 kDa subunit A (RPA2A).